We begin with the raw amino-acid sequence, 63 residues long: Large ribosomal subunit protein bL32 (63 aa).

The interval 1 to 23 (MATPKAKVSKSRRDKRRAQFTAR) is disordered. The segment covering 7–18 (KVSKSRRDKRRA) has biased composition (basic residues).

This sequence belongs to the bacterial ribosomal protein bL32 family.

This is Large ribosomal subunit protein bL32 from Chlorobium phaeobacteroides (strain BS1).